The chain runs to 185 residues: GTP cyclohydrolase 1 (185 aa).

Zn(2+) contacts are provided by cysteine 76, histidine 79, and cysteine 147.

The protein belongs to the GTP cyclohydrolase I family. As to quaternary structure, toroid-shaped homodecamer, composed of two pentamers of five dimers.

The catalysed reaction is GTP + H2O = 7,8-dihydroneopterin 3'-triphosphate + formate + H(+). Its pathway is cofactor biosynthesis; 7,8-dihydroneopterin triphosphate biosynthesis; 7,8-dihydroneopterin triphosphate from GTP: step 1/1. This Clostridium perfringens (strain ATCC 13124 / DSM 756 / JCM 1290 / NCIMB 6125 / NCTC 8237 / Type A) protein is GTP cyclohydrolase 1.